The chain runs to 125 residues: Interleukin-6 (125 aa).

Cysteines 16 and 26 form a disulfide.

This sequence belongs to the IL-6 superfamily. As to quaternary structure, component of a hexamer of two molecules each of IL6, IL6R and IL6ST; first binds to IL6R to associate with the signaling subunit IL6ST. Interacts with IL6R (via the N-terminal ectodomain); this interaction may be affected by IL6R-binding with SORL1, hence decreasing IL6 cis signaling. Interacts with SORL1 (via the N-terminal ectodomain); this interaction leads to IL6 internalization and lysosomal degradation. May form a trimeric complex with the soluble SORL1 ectodomain and soluble IL6R receptor; this interaction might stabilize circulating IL6, hence promoting IL6 trans signaling.

The protein resides in the secreted. Cytokine with a wide variety of biological functions in immunity, tissue regeneration, and metabolism. Binds to IL6R, then the complex associates to the signaling subunit IL6ST/gp130 to trigger the intracellular IL6-signaling pathway. The interaction with the membrane-bound IL6R and IL6ST stimulates 'classic signaling', whereas the binding of IL6 and soluble IL6R to IL6ST stimulates 'trans-signaling'. Alternatively, 'cluster signaling' occurs when membrane-bound IL6:IL6R complexes on transmitter cells activate IL6ST receptors on neighboring receiver cells. In terms of biological role, IL6 is a potent inducer of the acute phase response. Rapid production of IL6 contributes to host defense during infection and tissue injury, but excessive IL6 synthesis is involved in disease pathology. In the innate immune response, is synthesized by myeloid cells, such as macrophages and dendritic cells, upon recognition of pathogens through toll-like receptors (TLRs) at the site of infection or tissue injury. In the adaptive immune response, is required for the differentiation of B cells into immunoglobulin-secreting cells. Plays a major role in the differentiation of CD4(+) T cell subsets. Essential factor for the development of T follicular helper (Tfh) cells that are required for the induction of germinal-center formation. Required to drive naive CD4(+) T cells to the Th17 lineage. Also required for proliferation of myeloma cells and the survival of plasmablast cells. Functionally, acts as an essential factor in bone homeostasis and on vessels directly or indirectly by induction of VEGF, resulting in increased angiogenesis activity and vascular permeability. Induces, through 'trans-signaling' and synergistically with IL1B and TNF, the production of VEGF. Involved in metabolic controls, is discharged into the bloodstream after muscle contraction increasing lipolysis and improving insulin resistance. 'Trans-signaling' in central nervous system also regulates energy and glucose homeostasis. Mediates, through GLP-1, crosstalk between insulin-sensitive tissues, intestinal L cells and pancreatic islets to adapt to changes in insulin demand. Also acts as a myokine. Plays a protective role during liver injury, being required for maintenance of tissue regeneration. Also has a pivotal role in iron metabolism by regulating HAMP/hepcidin expression upon inflammation or bacterial infection. Through activation of IL6ST-YAP-NOTCH pathway, induces inflammation-induced epithelial regeneration. The polypeptide is Interleukin-6 (IL6) (Neovison vison (American mink)).